Here is a 355-residue protein sequence, read N- to C-terminus: Cobalt-precorrin-5B C(1)-methyltransferase (355 aa).

Belongs to the CbiD family.

The enzyme catalyses Co-precorrin-5B + S-adenosyl-L-methionine = Co-precorrin-6A + S-adenosyl-L-homocysteine. It participates in cofactor biosynthesis; adenosylcobalamin biosynthesis; cob(II)yrinate a,c-diamide from sirohydrochlorin (anaerobic route): step 6/10. In terms of biological role, catalyzes the methylation of C-1 in cobalt-precorrin-5B to form cobalt-precorrin-6A. The protein is Cobalt-precorrin-5B C(1)-methyltransferase of Parasynechococcus marenigrum (strain WH8102).